The primary structure comprises 223 residues: RNA-free ribonuclease P (223 aa).

It belongs to the HARP family.

It carries out the reaction Endonucleolytic cleavage of RNA, removing 5'-extranucleotides from tRNA precursor.. RNA-free RNase P that catalyzes the removal of the 5'-leader sequence from pre-tRNA to produce the mature 5'-terminus. This chain is RNA-free ribonuclease P, found in Methanococcus vannielii (strain ATCC 35089 / DSM 1224 / JCM 13029 / OCM 148 / SB).